The primary structure comprises 102 residues: Large ribosomal subunit protein uL24 (102 aa).

Belongs to the universal ribosomal protein uL24 family. In terms of assembly, part of the 50S ribosomal subunit.

Its function is as follows. One of two assembly initiator proteins, it binds directly to the 5'-end of the 23S rRNA, where it nucleates assembly of the 50S subunit. Functionally, one of the proteins that surrounds the polypeptide exit tunnel on the outside of the subunit. The sequence is that of Large ribosomal subunit protein uL24 from Allorhizobium ampelinum (strain ATCC BAA-846 / DSM 112012 / S4) (Agrobacterium vitis (strain S4)).